The following is a 126-amino-acid chain: Fluoride-specific ion channel FluC (126 aa).

A run of 4 helical transmembrane segments spans residues 5–25 (IAVI…FALW), 34–54 (WGTL…LAVF), 67–87 (LVIT…GEVV), and 95–115 (FGLA…LTWA). Gly-74 and Thr-77 together coordinate Na(+).

It belongs to the fluoride channel Fluc/FEX (TC 1.A.43) family.

Its subcellular location is the cell inner membrane. The catalysed reaction is fluoride(in) = fluoride(out). With respect to regulation, na(+) is not transported, but it plays an essential structural role and its presence is essential for fluoride channel function. In terms of biological role, fluoride-specific ion channel. Important for reducing fluoride concentration in the cell, thus reducing its toxicity. The sequence is that of Fluoride-specific ion channel FluC from Paracidovorax citrulli (strain AAC00-1) (Acidovorax citrulli).